The primary structure comprises 224 residues: Mammalian ependymin-related protein 1 (224 aa).

The N-terminal stretch at 1-37 (MPGRAPLRTVPGALGAWLLGGLWAWTLCGLCSLGAVG) is a signal peptide. 3 disulfide bridges follow: cysteine 42–cysteine 172, cysteine 88–cysteine 222, and cysteine 113–cysteine 210. Residues asparagine 130 and asparagine 182 are each glycosylated (N-linked (GlcNAc...) asparagine).

This sequence belongs to the ependymin family. Homodimer. Post-translationally, N-glycosylated; the glycan contains mannose-6-phosphate moieties. As to expression, ubiquitous. Detected in brain, heart, skeletal muscle, kidney, testis, ovary and prostate.

It is found in the lysosome lumen. It localises to the secreted. Functionally, binds anionic lipids and gangliosides at acidic pH. The chain is Mammalian ependymin-related protein 1 (EPDR1) from Homo sapiens (Human).